Reading from the N-terminus, the 93-residue chain is N-myc protein (93 aa).

As to quaternary structure, efficient DNA binding requires dimerization with another bHLH protein. Binds DNA as a heterodimer with MAX. As to expression, barely detectable in most tissues assayed.

The protein localises to the nucleus. Functionally, may function as a transcription factor. The protein is N-myc protein (mycn) of Danio rerio (Zebrafish).